Here is a 403-residue protein sequence, read N- to C-terminus: Renin (403 aa).

The N-terminal stretch at 1 to 22 is a signal peptide; it reads MARCRMPRWGLLLVLWGSCTFG. Residues 23–65 constitute a propeptide, activation peptide; that stretch reads LPADTGAFRRIFLKKMPSIRESLKERGVDVAGLGAEWNQFTKR. Asparagine 70 is a glycosylation site (N-linked (GlcNAc...) asparagine). The Peptidase A1 domain occupies 85–400; it reads YYGEIGIGTP…DRHNNRIGFA (316 aa). Aspartate 103 is a catalytic residue. An intrachain disulfide couples cysteine 116 to cysteine 123. An N-linked (GlcNAc...) asparagine glycan is attached at asparagine 140. A disulfide bond links cysteine 279 and cysteine 283. Residue aspartate 288 is part of the active site. A disulfide bridge links cysteine 322 with cysteine 359.

This sequence belongs to the peptidase A1 family. Interacts with ATP6AP2.

The protein localises to the secreted. Its subcellular location is the membrane. The enzyme catalyses Cleavage of Leu-|-Xaa bond in angiotensinogen to generate angiotensin I.. Its activity is regulated as follows. Interaction with ATP6AP2 results in a 5-fold increased efficiency in angiotensinogen processing. Its function is as follows. Renin is a highly specific endopeptidase, whose only known function is to generate angiotensin I from angiotensinogen in the plasma, initiating a cascade of reactions that produce an elevation of blood pressure and increased sodium retention by the kidney. This Canis lupus familiaris (Dog) protein is Renin (REN).